Consider the following 265-residue polypeptide: Undecaprenyl-diphosphatase (265 aa).

Transmembrane regions (helical) follow at residues 42 to 62 (ATTFEVAIQLGAILAVVVLYW), 82 to 102 (GIMLLLLTSLPASVLGLAAHS), 108 to 128 (LFTPSTVAIALAVGAIFMLLV), 143 to 163 (MSPALALGIGCFQCLALWPGF), 181 to 201 (GLAAEYSFIAAVPIMFAATGY), 221 to 241 (GFVVSFLSAWAAVKLFIALVG), and 248 to 264 (FAWYRLAIAPLVYYFMA).

Belongs to the UppP family.

It is found in the cell inner membrane. The catalysed reaction is di-trans,octa-cis-undecaprenyl diphosphate + H2O = di-trans,octa-cis-undecaprenyl phosphate + phosphate + H(+). Its function is as follows. Catalyzes the dephosphorylation of undecaprenyl diphosphate (UPP). Confers resistance to bacitracin. The polypeptide is Undecaprenyl-diphosphatase (Nitratidesulfovibrio vulgaris (strain ATCC 29579 / DSM 644 / CCUG 34227 / NCIMB 8303 / VKM B-1760 / Hildenborough) (Desulfovibrio vulgaris)).